A 459-amino-acid chain; its full sequence is Putrescine aminotransferase (459 aa).

Pyridoxal 5'-phosphate contacts are provided by residues 150-151 (GT) and Gln-274. Lys-300 carries the N6-(pyridoxal phosphate)lysine modification. Thr-332 serves as a coordination point for pyridoxal 5'-phosphate.

This sequence belongs to the class-III pyridoxal-phosphate-dependent aminotransferase family. Putrescine aminotransferase subfamily. Requires pyridoxal 5'-phosphate as cofactor.

It carries out the reaction an alkane-alpha,omega-diamine + 2-oxoglutarate = an omega-aminoaldehyde + L-glutamate. The enzyme catalyses putrescine + 2-oxoglutarate = 1-pyrroline + L-glutamate + H2O. It catalyses the reaction cadaverine + 2-oxoglutarate = 5-aminopentanal + L-glutamate. It functions in the pathway amine and polyamine degradation; putrescine degradation; 4-aminobutanal from putrescine (transaminase route): step 1/1. Functionally, catalyzes the aminotransferase reaction from putrescine to 2-oxoglutarate, leading to glutamate and 4-aminobutanal, which spontaneously cyclizes to form 1-pyrroline. This is the first step in one of two pathways for putrescine degradation, where putrescine is converted into 4-aminobutanoate (gamma-aminobutyrate or GABA) via 4-aminobutanal. Also functions as a cadaverine transaminase in a a L-lysine degradation pathway to succinate that proceeds via cadaverine, glutarate and L-2-hydroxyglutarate. The polypeptide is Putrescine aminotransferase (Escherichia fergusonii (strain ATCC 35469 / DSM 13698 / CCUG 18766 / IAM 14443 / JCM 21226 / LMG 7866 / NBRC 102419 / NCTC 12128 / CDC 0568-73)).